A 277-amino-acid polypeptide reads, in one-letter code: MIOREX complex component 2 (277 aa).

This sequence belongs to the NAD(P)-dependent epimerase/dehydratase family. As to quaternary structure, associates with the mitochondrial ribosome. Component of a multi-subunit COQ enzyme complex.

It localises to the mitochondrion. It functions in the pathway cofactor biosynthesis; ubiquinone biosynthesis. In terms of biological role, component of MIOREX complexes, large expressome-like assemblies of ribosomes with factors involved in all the steps of post-transcriptional gene expression. Component of a multi-subunit COQ enzyme complex required for coenzyme Q biosynthesis. The protein is MIOREX complex component 2 of Saccharomyces cerevisiae (strain ATCC 204508 / S288c) (Baker's yeast).